Reading from the N-terminus, the 122-residue chain is Large ribosomal subunit protein uL14c (122 aa).

This sequence belongs to the universal ribosomal protein uL14 family. In terms of assembly, part of the 50S ribosomal subunit.

It localises to the plastid. It is found in the chloroplast. Functionally, binds to 23S rRNA. This chain is Large ribosomal subunit protein uL14c, found in Pyropia yezoensis (Susabi-nori).